A 315-amino-acid polypeptide reads, in one-letter code: 10-epi-cubebol synthase (315 aa).

Residues Asp79, Asn220, Ser224, and Glu228 each coordinate Mg(2+). A DDXXD motif motif is present at residues 79–83 (DDVCE). Residues 220–228 (NDIYSLRKE) carry the NXXXSXXXE motif motif.

Belongs to the terpene synthase family. The cofactor is Mg(2+).

The enzyme catalyses (2E,6E)-farnesyl diphosphate + H2O = 10-epi-cubebol + diphosphate. In terms of biological role, catalyzes the cyclization of farnesyl diphosphate (FPP) to 10-epi-cubebol. Is also responsible for the formation of many other sesquiterpenes, mainly cadalanes and cubebanes, including 1,10-di-epi-cubebol and the cadalanes delta-cadinene, T-cadinol and alpha-cadinol. This chain is 10-epi-cubebol synthase, found in Sorangium cellulosum (strain So ce56) (Polyangium cellulosum (strain So ce56)).